A 273-amino-acid chain; its full sequence is MEKALKIKQIVVVLIAIAAVAIGYYMFQSITSPAKAVAKQENVVQLASEQPKVEMNKTAPSRFNGKERKVAYLTFDDGPGKYTAELLNTLKQHDAKATFFLIGANVKEFPDLVKRENAEGHYVGMHSMTHNFAKLYKNGEYVNEMKEDQGLIANIIGKSPKLTRPPYGSMPGLNEGLRNKVVEGGFKVWDWTIDSLDWRYNKMPVDAAAAQIAQNVLTNATKPQEVILMHDIHPQSVAAVPAILKGLKEKGYEFEAYHEESHFPVNFWHDNRM.

Residues 10-30 traverse the membrane as a helical segment; the sequence is IVVVLIAIAAVAIGYYMFQSI. A NodB homology domain is found at 69 to 255; the sequence is KVAYLTFDDG…GLKEKGYEFE (187 aa). Catalysis depends on Asp76, which acts as the Proton acceptor. Zn(2+) contacts are provided by Asp77, His126, and His130. His230 serves as the catalytic Proton donor.

It belongs to the polysaccharide deacetylase family. Zn(2+) serves as cofactor. Requires Co(2+) as cofactor. The cofactor is Ni(2+).

Its subcellular location is the cell membrane. The enzyme catalyses peptidoglycan-N-acetyl-D-glucosamine + H2O = peptidoglycan-D-glucosamine + acetate.. Its activity is regulated as follows. Inhibited by the hydroxamate N-hydroxy-4-(naphthalene-1-yl)benzamide (NHNB). In terms of biological role, catalyzes the deacetylation of N-acetylglucosamine (GlcNAc) residues in peptidoglycan. The chain is Peptidoglycan-N-acetylglucosamine deacetylase BC_1974 from Bacillus cereus (strain ATCC 14579 / DSM 31 / CCUG 7414 / JCM 2152 / NBRC 15305 / NCIMB 9373 / NCTC 2599 / NRRL B-3711).